The primary structure comprises 409 residues: Multifunctional CCA protein (409 aa).

G8 and R11 together coordinate ATP. CTP is bound by residues G8 and R11. Mg(2+) is bound by residues D21 and D23. ATP contacts are provided by R91, R137, and R140. 3 residues coordinate CTP: R91, R137, and R140. Residues 228–329 (TGAHTLSVLL…LELLQSFDVF (102 aa)) form the HD domain.

Belongs to the tRNA nucleotidyltransferase/poly(A) polymerase family. Bacterial CCA-adding enzyme type 1 subfamily. Monomer. Can also form homodimers and oligomers. Mg(2+) is required as a cofactor. Requires Ni(2+) as cofactor.

It carries out the reaction a tRNA precursor + 2 CTP + ATP = a tRNA with a 3' CCA end + 3 diphosphate. The catalysed reaction is a tRNA with a 3' CCA end + 2 CTP + ATP = a tRNA with a 3' CCACCA end + 3 diphosphate. Its function is as follows. Catalyzes the addition and repair of the essential 3'-terminal CCA sequence in tRNAs without using a nucleic acid template. Adds these three nucleotides in the order of C, C, and A to the tRNA nucleotide-73, using CTP and ATP as substrates and producing inorganic pyrophosphate. tRNA 3'-terminal CCA addition is required both for tRNA processing and repair. Also involved in tRNA surveillance by mediating tandem CCA addition to generate a CCACCA at the 3' terminus of unstable tRNAs. While stable tRNAs receive only 3'-terminal CCA, unstable tRNAs are marked with CCACCA and rapidly degraded. The sequence is that of Multifunctional CCA protein from Pseudomonas fluorescens (strain ATCC BAA-477 / NRRL B-23932 / Pf-5).